The sequence spans 253 residues: 5'/3'-nucleotidase SurE (253 aa).

4 residues coordinate a divalent metal cation: Asp8, Asp9, Ser39, and Asn92.

It belongs to the SurE nucleotidase family. A divalent metal cation serves as cofactor.

It is found in the cytoplasm. It carries out the reaction a ribonucleoside 5'-phosphate + H2O = a ribonucleoside + phosphate. It catalyses the reaction a ribonucleoside 3'-phosphate + H2O = a ribonucleoside + phosphate. The enzyme catalyses [phosphate](n) + H2O = [phosphate](n-1) + phosphate + H(+). Functionally, nucleotidase with a broad substrate specificity as it can dephosphorylate various ribo- and deoxyribonucleoside 5'-monophosphates and ribonucleoside 3'-monophosphates with highest affinity to 3'-AMP. Also hydrolyzes polyphosphate (exopolyphosphatase activity) with the preference for short-chain-length substrates (P20-25). Might be involved in the regulation of dNTP and NTP pools, and in the turnover of 3'-mononucleotides produced by numerous intracellular RNases (T1, T2, and F) during the degradation of various RNAs. In Klebsiella pneumoniae (strain 342), this protein is 5'/3'-nucleotidase SurE.